The sequence spans 151 residues: Methylated-DNA--protein-cysteine methyltransferase (151 aa).

Catalysis depends on cysteine 119, which acts as the Nucleophile; methyl group acceptor.

The protein belongs to the MGMT family.

It localises to the cytoplasm. The catalysed reaction is a 6-O-methyl-2'-deoxyguanosine in DNA + L-cysteinyl-[protein] = S-methyl-L-cysteinyl-[protein] + a 2'-deoxyguanosine in DNA. It carries out the reaction a 4-O-methyl-thymidine in DNA + L-cysteinyl-[protein] = a thymidine in DNA + S-methyl-L-cysteinyl-[protein]. In terms of biological role, involved in the cellular defense against the biological effects of O6-methylguanine (O6-MeG) and O4-methylthymine (O4-MeT) in DNA. Repairs the methylated nucleobase in DNA by stoichiometrically transferring the methyl group to a cysteine residue in the enzyme. This is a suicide reaction: the enzyme is irreversibly inactivated. This Saccharolobus islandicus (strain L.S.2.15 / Lassen #1) (Sulfolobus islandicus) protein is Methylated-DNA--protein-cysteine methyltransferase.